The chain runs to 625 residues: ATP-dependent RNA helicase DBP9 (625 aa).

A disordered region spans residues 1-21 (MKRKLDANNVPSPEDSAGKSI). Residues 24–52 (HSFETLKLDPRLLQALTQQKFTKPTPIQA) carry the Q motif motif. The region spanning 55 to 233 (IPLALDGKDV…GLFCRNPVVL (179 aa)) is the Helicase ATP-binding domain. 68–75 (AKTGSGKT) contributes to the ATP binding site. The DEAD box signature appears at 181–184 (DEAD). The Helicase C-terminal domain occupies 260 to 485 (LLTYVIFKLQ…EVKPYHFDMK (226 aa)). Disordered regions lie at residues 339–393 (RKNS…EKDY) and 590–625 (IRKAREKNKGRGRGGKAGRGGKRVDPLKSFNSGGKH). Residues 347 to 357 (RKSDQCSRDSE) are compositionally biased toward basic and acidic residues. Positions 361 to 370 (AQTSRNNDQY) are enriched in polar residues. Positions 599-610 (GRGRGGKAGRGG) are enriched in basic residues.

This sequence belongs to the DEAD box helicase family. DDX56/DBP9 subfamily.

The protein resides in the nucleus. It localises to the nucleolus. It carries out the reaction ATP + H2O = ADP + phosphate + H(+). ATP-binding RNA helicase involved in the biogenesis of 60S ribosomal subunits and is required for the normal formation of 25S and 5.8S rRNAs. This chain is ATP-dependent RNA helicase DBP9 (DBP9), found in Ajellomyces capsulatus (strain NAm1 / WU24) (Darling's disease fungus).